A 201-amino-acid polypeptide reads, in one-letter code: Transcriptional regulator GfcR (201 aa).

This sequence belongs to the purine/pyrimidine phosphoribosyltransferase family. GfcR subfamily.

This chain is Transcriptional regulator GfcR, found in Methanobrevibacter smithii (strain ATCC 35061 / DSM 861 / OCM 144 / PS).